Here is a 96-residue protein sequence, read N- to C-terminus: ATP synthase subunit c (96 aa).

Helical transmembrane passes span 26-46 and 68-88; these read GLVL…CGIG and IMVT…YALV.

The protein belongs to the ATPase C chain family. In terms of assembly, F-type ATPases have 2 components, F(1) - the catalytic core - and F(0) - the membrane proton channel. F(1) has five subunits: alpha(3), beta(3), gamma(1), delta(1), epsilon(1). F(0) has three main subunits: a(1), b(2) and c(10-14). The alpha and beta chains form an alternating ring which encloses part of the gamma chain. F(1) is attached to F(0) by a central stalk formed by the gamma and epsilon chains, while a peripheral stalk is formed by the delta and b chains.

Its subcellular location is the cell inner membrane. Its function is as follows. F(1)F(0) ATP synthase produces ATP from ADP in the presence of a proton or sodium gradient. F-type ATPases consist of two structural domains, F(1) containing the extramembraneous catalytic core and F(0) containing the membrane proton channel, linked together by a central stalk and a peripheral stalk. During catalysis, ATP synthesis in the catalytic domain of F(1) is coupled via a rotary mechanism of the central stalk subunits to proton translocation. Key component of the F(0) channel; it plays a direct role in translocation across the membrane. A homomeric c-ring of between 10-14 subunits forms the central stalk rotor element with the F(1) delta and epsilon subunits. The protein is ATP synthase subunit c of Oleidesulfovibrio alaskensis (strain ATCC BAA-1058 / DSM 17464 / G20) (Desulfovibrio alaskensis).